A 471-amino-acid polypeptide reads, in one-letter code: PTS system mannitol-specific EIICB component (471 aa).

At 1 to 29 (MTHTSENQAGFRVKIQRFGSYLSGMIMPN) the chain is on the cytoplasmic side. The region spanning 18-342 (FGSYLSGMIM…FFVASIFLKS (325 aa)) is the PTS EIIC type-2 domain. The helical transmembrane segment at 30–51 (IGAFIAWGIITALFIPTGWLPN) threads the bilayer. Residues 52–55 (ETFA) are Extracellular-facing. A helical transmembrane segment spans residues 56 to 76 (KLVGPMITYLLPLLIGYTGGK). Over 77–139 (MIYDVRGGVV…QGFEMLVNNF (63 aa)) the chain is Cytoplasmic. Residues 140 to 161 (SAGIIGGLLTLAAFKGVGPVVS) traverse the membrane as a helical segment. Topologically, residues 162-170 (AISKTLAAG) are extracellular. Residues 171–191 (VEKIVDLHLLPLANIFIEPGK) form a helical membrane-spanning segment. At 192 to 278 (VLFLNNAINH…VLMRPILILA (87 aa)) the chain is on the cytoplasmic side. Residues 279–298 (AIAGGVSGVLTFTIFDAGLV) traverse the membrane as a helical segment. Residues 299–318 (AVPSPGSIFALLAMTPKGNY) are Extracellular-facing. Residues 319–340 (LGVLAGVLVATAVSFFVASIFL) traverse the membrane as a helical segment. Residues 341 to 471 (KSAKNNEEDI…YDELIEMLKK (131 aa)) lie on the Cytoplasmic side of the membrane. The region spanning 383 to 471 (KKIVFACDAG…YDELIEMLKK (89 aa)) is the PTS EIIB type-2 domain. C389 serves as the catalytic Phosphocysteine intermediate; for EIIB activity. C389 carries the post-translational modification Phosphocysteine; by EIIA.

In terms of assembly, homodimer.

The protein localises to the cell membrane. The catalysed reaction is D-mannitol(out) + N(pros)-phospho-L-histidyl-[protein] = D-mannitol 1-phosphate(in) + L-histidyl-[protein]. Its function is as follows. The phosphoenolpyruvate-dependent sugar phosphotransferase system (sugar PTS), a major carbohydrate active transport system, catalyzes the phosphorylation of incoming sugar substrates concomitantly with their translocation across the cell membrane. The enzyme II CmtAB PTS system is involved in D-mannitol transport. The sequence is that of PTS system mannitol-specific EIICB component from Geobacillus stearothermophilus (Bacillus stearothermophilus).